We begin with the raw amino-acid sequence, 535 residues long: GMP synthase [glutamine-hydrolyzing] (535 aa).

The Glutamine amidotransferase type-1 domain occupies 24-217 (KILIVDFGSQ…VRKVAGLTGD (194 aa)). Cys-101 acts as the Nucleophile in catalysis. Residues His-191 and Glu-193 contribute to the active site. Residues 218–410 (WTMRAFREEA…LGLPEIFVGR (193 aa)) form the GMPS ATP-PPase domain. 245–251 (SGGVDSS) is a binding site for ATP.

In terms of assembly, homodimer.

It catalyses the reaction XMP + L-glutamine + ATP + H2O = GMP + L-glutamate + AMP + diphosphate + 2 H(+). It functions in the pathway purine metabolism; GMP biosynthesis; GMP from XMP (L-Gln route): step 1/1. Catalyzes the synthesis of GMP from XMP. The polypeptide is GMP synthase [glutamine-hydrolyzing] (Nitrobacter winogradskyi (strain ATCC 25391 / DSM 10237 / CIP 104748 / NCIMB 11846 / Nb-255)).